Consider the following 453-residue polypeptide: Phosphoglucosamine mutase (453 aa).

Residue serine 108 is the Phosphoserine intermediate of the active site. Mg(2+) contacts are provided by serine 108, aspartate 247, aspartate 249, and aspartate 251. Phosphoserine is present on serine 108.

It belongs to the phosphohexose mutase family. Requires Mg(2+) as cofactor. In terms of processing, activated by phosphorylation.

The catalysed reaction is alpha-D-glucosamine 1-phosphate = D-glucosamine 6-phosphate. In terms of biological role, catalyzes the conversion of glucosamine-6-phosphate to glucosamine-1-phosphate. The chain is Phosphoglucosamine mutase from Methylobacillus flagellatus (strain ATCC 51484 / DSM 6875 / VKM B-1610 / KT).